We begin with the raw amino-acid sequence, 86 residues long: BaSO(4)-adsorbing protein 1 (86 aa).

3 disulfides stabilise this stretch: Cys6–Cys22, Cys18–Cys49, and Cys39–Cys54. Residues 58–86 (GDSASNTQNQGGSRRQENEDQGDDEWDRK) form a disordered region. Residues 59–70 (DSASNTQNQGGS) are compositionally biased toward polar residues. The span at 76–86 (EDQGDDEWDRK) shows a compositional bias: acidic residues.

Salivary gland (at protein level).

It is found in the secreted. Functionally, inhibits lectin and classical pathways of complement system activation in the host with no significant effect on the alternative pathway. Inhibits host extrinsic blood coagulation pathway but not the intrinsic cascade. Binds to neutral and negatively charged membranes in vitro; binding is reduced upon pre-incubation with Ca(2+). This Ornithodoros savignyi (African eyed tampan) protein is BaSO(4)-adsorbing protein 1.